The following is a 248-amino-acid chain: tRNA pseudouridine synthase A (248 aa).

Residue aspartate 53 is the Nucleophile of the active site. Tyrosine 111 is a substrate binding site.

The protein belongs to the tRNA pseudouridine synthase TruA family. As to quaternary structure, homodimer.

The enzyme catalyses uridine(38/39/40) in tRNA = pseudouridine(38/39/40) in tRNA. In terms of biological role, formation of pseudouridine at positions 38, 39 and 40 in the anticodon stem and loop of transfer RNAs. The protein is tRNA pseudouridine synthase A of Listeria innocua serovar 6a (strain ATCC BAA-680 / CLIP 11262).